The chain runs to 708 residues: Elongation factor G (708 aa).

The tr-type G domain occupies 9–289 (MFTRNIGIMA…AVCAFLPSPE (281 aa)). GTP contacts are provided by residues 18 to 25 (AHIDAGKT), 86 to 90 (DTPGH), and 140 to 143 (NKMD).

The protein belongs to the TRAFAC class translation factor GTPase superfamily. Classic translation factor GTPase family. EF-G/EF-2 subfamily.

Its subcellular location is the cytoplasm. In terms of biological role, catalyzes the GTP-dependent ribosomal translocation step during translation elongation. During this step, the ribosome changes from the pre-translocational (PRE) to the post-translocational (POST) state as the newly formed A-site-bound peptidyl-tRNA and P-site-bound deacylated tRNA move to the P and E sites, respectively. Catalyzes the coordinated movement of the two tRNA molecules, the mRNA and conformational changes in the ribosome. In Parabacteroides distasonis (strain ATCC 8503 / DSM 20701 / CIP 104284 / JCM 5825 / NCTC 11152), this protein is Elongation factor G.